We begin with the raw amino-acid sequence, 416 residues long: Gamma-glutamyl phosphate reductase (416 aa).

It belongs to the gamma-glutamyl phosphate reductase family.

The protein localises to the cytoplasm. The catalysed reaction is L-glutamate 5-semialdehyde + phosphate + NADP(+) = L-glutamyl 5-phosphate + NADPH + H(+). It functions in the pathway amino-acid biosynthesis; L-proline biosynthesis; L-glutamate 5-semialdehyde from L-glutamate: step 2/2. Functionally, catalyzes the NADPH-dependent reduction of L-glutamate 5-phosphate into L-glutamate 5-semialdehyde and phosphate. The product spontaneously undergoes cyclization to form 1-pyrroline-5-carboxylate. This Streptococcus pyogenes serotype M6 (strain ATCC BAA-946 / MGAS10394) protein is Gamma-glutamyl phosphate reductase.